We begin with the raw amino-acid sequence, 419 residues long: Gamma-glutamyl phosphate reductase (419 aa).

It belongs to the gamma-glutamyl phosphate reductase family.

It is found in the cytoplasm. The catalysed reaction is L-glutamate 5-semialdehyde + phosphate + NADP(+) = L-glutamyl 5-phosphate + NADPH + H(+). It functions in the pathway amino-acid biosynthesis; L-proline biosynthesis; L-glutamate 5-semialdehyde from L-glutamate: step 2/2. Its function is as follows. Catalyzes the NADPH-dependent reduction of L-glutamate 5-phosphate into L-glutamate 5-semialdehyde and phosphate. The product spontaneously undergoes cyclization to form 1-pyrroline-5-carboxylate. This Ruthia magnifica subsp. Calyptogena magnifica protein is Gamma-glutamyl phosphate reductase.